A 280-amino-acid polypeptide reads, in one-letter code: Ribose-phosphate pyrophosphokinase (280 aa).

ATP-binding positions include 32–34 (DGE) and 89–90 (RQ). 2 residues coordinate Mg(2+): histidine 122 and aspartate 160. Lysine 183 is a catalytic residue. D-ribose 5-phosphate-binding positions include arginine 185, aspartate 209, and 213-217 (STGGT).

The protein belongs to the ribose-phosphate pyrophosphokinase family. Class III (archaeal) subfamily. Mg(2+) is required as a cofactor.

Its subcellular location is the cytoplasm. The enzyme catalyses D-ribose 5-phosphate + ATP = 5-phospho-alpha-D-ribose 1-diphosphate + AMP + H(+). It participates in metabolic intermediate biosynthesis; 5-phospho-alpha-D-ribose 1-diphosphate biosynthesis; 5-phospho-alpha-D-ribose 1-diphosphate from D-ribose 5-phosphate (route I): step 1/1. Activated by Co(2+) and Ni(2+) ions, however Mg(2+) ion shows almost no significant effect on the activity. Equally inhibited by ADP, CTP and GTP, while dTTP and UTP are less inhibitory. In terms of biological role, involved in the biosynthesis of the central metabolite phospho-alpha-D-ribosyl-1-pyrophosphate (PRPP) via the transfer of pyrophosphoryl group from ATP to 1-hydroxyl of ribose-5-phosphate (Rib-5-P). It can also use CTP and GTP as substrates in addition to ATP. The protein is Ribose-phosphate pyrophosphokinase of Thermococcus kodakarensis (strain ATCC BAA-918 / JCM 12380 / KOD1) (Pyrococcus kodakaraensis (strain KOD1)).